Consider the following 1420-residue polypeptide: DNA-directed RNA polymerase subunit beta' (1420 aa).

Cysteine 71, cysteine 73, cysteine 86, and cysteine 89 together coordinate Zn(2+). Residues aspartate 461, aspartate 463, and aspartate 465 each contribute to the Mg(2+) site. Residues cysteine 815, cysteine 889, cysteine 896, and cysteine 899 each contribute to the Zn(2+) site.

The protein belongs to the RNA polymerase beta' chain family. The RNAP catalytic core consists of 2 alpha, 1 beta, 1 beta' and 1 omega subunit. When a sigma factor is associated with the core the holoenzyme is formed, which can initiate transcription. Mg(2+) is required as a cofactor. Requires Zn(2+) as cofactor.

It carries out the reaction RNA(n) + a ribonucleoside 5'-triphosphate = RNA(n+1) + diphosphate. Its function is as follows. DNA-dependent RNA polymerase catalyzes the transcription of DNA into RNA using the four ribonucleoside triphosphates as substrates. This chain is DNA-directed RNA polymerase subunit beta', found in Histophilus somni (strain 2336) (Haemophilus somnus).